The following is a 100-amino-acid chain: Secreted protein of Ly-6 domain 1 (100 aa).

Residues 1–22 form the signal peptide; sequence MAKCLLLLLLVVLSSLLGLPQA. The region spanning 23-100 is the UPAR/Ly6 domain; that stretch reads LECFQCNRVN…CHDSPLCNKF (78 aa). Disulfide bonds link cysteine 25–cysteine 52, cysteine 28–cysteine 37, cysteine 44–cysteine 70, cysteine 74–cysteine 90, and cysteine 91–cysteine 97. A glycan (N-linked (GlcNAc...) asparagine) is linked at asparagine 60.

Post-translationally, glycosylated. Expressed in placenta, where it is detected in both fetal tissues (cotyledon and intercotyledon) and maternal tissues (caruncle and intercaruncular endometrium) (at protein level). Expressed in the mesenchyme area of villi in the cotyledon (at protein level). In endometrium, expressed in the luminal epithelium and weakly in the subluminal stroma (at protein level). Detected in trophoblast mononucleate cells (TMCs) (at protein level). Also detected in trophoblast binucleate cells (BNCs). Overall, expression is strongest in fetal tissue and lower in maternal tissue. Not detected in other tissues tested.

The protein localises to the secreted. Functionally, binds specifically to type I collagen. This is Secreted protein of Ly-6 domain 1 from Bos taurus (Bovine).